The sequence spans 746 residues: Bud site selection protein 7 (746 aa).

The interval 733-746 (LNFFTTCTIGCYDA) is CHS5-binding.

This sequence belongs to the CHAPS family. As to quaternary structure, component of the CHS5/6 complex composed of the 4 CHAPS proteins BCH1, BCH2v, BUD7, and CHS6 as well as at least CHS5 and GTP-bound ARF1. The complex interacts with the cargo protein CHS3.

It is found in the golgi apparatus. The protein resides in the trans-Golgi network membrane. Its function is as follows. Member of the CHS5-ARF1P-binding proteins (CHAPS) which mediates export of specific cargo proteins, including chitin synthase CHS3. May be involved in positioning the proximal bud pole signal. The polypeptide is Bud site selection protein 7 (BUD7) (Saccharomyces cerevisiae (strain ATCC 204508 / S288c) (Baker's yeast)).